Reading from the N-terminus, the 146-residue chain is ATP synthase epsilon chain (146 aa).

Basic and acidic residues predominate over residues 92 to 116 (ISVDQARRDRDSLRKKLNEHERSEQ). Residues 92–120 (ISVDQARRDRDSLRKKLNEHERSEQDPEV) form a disordered region.

This sequence belongs to the ATPase epsilon chain family. In terms of assembly, F-type ATPases have 2 components, CF(1) - the catalytic core - and CF(0) - the membrane proton channel. CF(1) has five subunits: alpha(3), beta(3), gamma(1), delta(1), epsilon(1). CF(0) has three main subunits: a, b and c.

It is found in the cell membrane. In terms of biological role, produces ATP from ADP in the presence of a proton gradient across the membrane. This is ATP synthase epsilon chain from Cutibacterium acnes (strain DSM 16379 / KPA171202) (Propionibacterium acnes).